Here is a 324-residue protein sequence, read N- to C-terminus: Carbonic anhydrase, chloroplastic (324 aa).

The protein belongs to the beta-class carbonic anhydrase family. In terms of assembly, homohexamer.

Its subcellular location is the plastid. The protein localises to the chloroplast stroma. It carries out the reaction hydrogencarbonate + H(+) = CO2 + H2O. Reversible hydration of carbon dioxide. The protein is Carbonic anhydrase, chloroplastic of Hordeum vulgare (Barley).